We begin with the raw amino-acid sequence, 153 residues long: SsrA-binding protein (153 aa).

Positions 132 to 153 are disordered; sequence REKDWLRERERVMKHDTRRRSD.

It belongs to the SmpB family.

Its subcellular location is the cytoplasm. In terms of biological role, required for rescue of stalled ribosomes mediated by trans-translation. Binds to transfer-messenger RNA (tmRNA), required for stable association of tmRNA with ribosomes. tmRNA and SmpB together mimic tRNA shape, replacing the anticodon stem-loop with SmpB. tmRNA is encoded by the ssrA gene; the 2 termini fold to resemble tRNA(Ala) and it encodes a 'tag peptide', a short internal open reading frame. During trans-translation Ala-aminoacylated tmRNA acts like a tRNA, entering the A-site of stalled ribosomes, displacing the stalled mRNA. The ribosome then switches to translate the ORF on the tmRNA; the nascent peptide is terminated with the 'tag peptide' encoded by the tmRNA and targeted for degradation. The ribosome is freed to recommence translation, which seems to be the essential function of trans-translation. In Bordetella avium (strain 197N), this protein is SsrA-binding protein.